We begin with the raw amino-acid sequence, 1015 residues long: Tolloid-like protein 2 (1015 aa).

The signal sequence occupies residues 1 to 25; sequence MPRATALGALVSLLLLLPLPRGAGG. Disordered regions lie at residues 24-49 and 88-130; these read GGLG…EQQL and VGAT…TTLL. Positions 26 to 149 are excised as a propeptide; that stretch reads LGERPDATAD…AKTFSPRVRR (124 aa). Over residues 103–113 the composition is skewed to polar residues; that stretch reads SESSPDTTAMD. Residues 115 to 125 show a composition bias toward basic and acidic residues; sequence GTKEAGKDGRE. Positions 149–349 constitute a Peptidase M12A domain; the sequence is RATTSRTERI…AQARKLYKCP (201 aa). N171 carries an N-linked (GlcNAc...) asparagine glycan. Intrachain disulfides connect C192/C348, C212/C234, C214/C215, and C351/C377. Zn(2+) is bound at residue H242. E243 is a catalytic residue. Residues H246 and H252 each coordinate Zn(2+). 2 CUB domains span residues 351-463 and 464-576; these read CGET…YEAT and CGGD…FFKE. 2 N-linked (GlcNAc...) asparagine glycosylation sites follow: N361 and N392. Intrachain disulfides connect C404–C426, C464–C490, C517–C539, C580–C592, C588–C601, C603–C616, C620–C646, C673–C695, C736–C747, C743–C756, C758–C771, and C776–C802. In terms of domain architecture, EGF-like 1; calcium-binding spans 576 to 617; that stretch reads EVDECSWPDHGGCEHRCVNTLGSYKCACDPGYELAADKKMCE. One can recognise a CUB 3 domain in the interval 620–732; the sequence is CGGFITKLNG…RGFRAHFFSD (113 aa). An N-linked (GlcNAc...) asparagine glycan is attached at N628. One can recognise an EGF-like 2; calcium-binding domain in the interval 732 to 772; it reads DKDECAKDNGGCQHECVNTFGSYLCRCRNGYWLHENGHDCK. CUB domains are found at residues 776 to 888 and 889 to 1005; these read CAHK…HSTE and CGGR…YTST. An N-linked (GlcNAc...) asparagine glycan is attached at N805. Cystine bridges form between C829–C851, C889–C919, and C946–C968. Omega-N-methylarginine occurs at positions 963 and 966.

It depends on Zn(2+) as a cofactor.

It localises to the secreted. Functionally, protease which specifically processes pro-lysyl oxidase. Required for the embryonic development. Predominant protease, which in the development, influences dorsal-ventral patterning and skeletogenesis. The protein is Tolloid-like protein 2 (TLL2) of Homo sapiens (Human).